The chain runs to 237 residues: Ribonuclease PH (237 aa).

Residues Arg86 and 124–126 (GTR) contribute to the phosphate site.

Belongs to the RNase PH family. Homohexameric ring arranged as a trimer of dimers.

The catalysed reaction is tRNA(n+1) + phosphate = tRNA(n) + a ribonucleoside 5'-diphosphate. Phosphorolytic 3'-5' exoribonuclease that plays an important role in tRNA 3'-end maturation. Removes nucleotide residues following the 3'-CCA terminus of tRNAs; can also add nucleotides to the ends of RNA molecules by using nucleoside diphosphates as substrates, but this may not be physiologically important. Probably plays a role in initiation of 16S rRNA degradation (leading to ribosome degradation) during starvation. This chain is Ribonuclease PH, found in Shewanella oneidensis (strain ATCC 700550 / JCM 31522 / CIP 106686 / LMG 19005 / NCIMB 14063 / MR-1).